The following is a 1439-amino-acid chain: ABC transporter G family member 14 (1439 aa).

Residues 1-17 (MEENSNKFEQELKEIGQ) are compositionally biased toward basic and acidic residues. Positions 1-21 (MEENSNKFEQELKEIGQDRNQ) are disordered. Positions 117–370 (FSILNFFKPS…FMSLGFDCEP (254 aa)) constitute an ABC transporter 1 domain. The region spanning 475-700 (LNDKFGLFTK…GSEFDAYRIC (226 aa)) is the ABC transmembrane type-2 1 domain. 6 helical membrane-spanning segments follow: residues 479-499 (FGLF…SSVF), 516-536 (ILSA…MTFI), 564-584 (IPFT…MFGL), 589-609 (GKFF…TALF), 614-634 (YLCP…IFML), and 734-754 (IIVY…MEYI). Residues 805–1049 (FTWQNIRYTV…LTSYFERHGV (245 aa)) enclose the ABC transporter 2 domain. 841–848 (GSSGAGKT) provides a ligand contact to ATP. Residues 1141–1366 (YYTYGSFVQS…YNTCQNYTSA (226 aa)) form the ABC transmembrane type-2 2 domain. 6 helical membrane-spanning segments follow: residues 1144-1164 (YGSF…FWNL), 1175-1195 (IFFI…VMPQ), 1217-1237 (FAIS…TIFF), 1256-1276 (FYFW…GQAV), 1283-1303 (MFFA…FSGV), and 1413-1433 (VGII…FVYL).

It belongs to the ABC transporter superfamily. ABCG family. PDR (TC 3.A.1.205) subfamily.

The protein resides in the membrane. This Dictyostelium discoideum (Social amoeba) protein is ABC transporter G family member 14 (abcG14).